The primary structure comprises 402 residues: Meiosis-specific cyclin rem1 (402 aa).

The protein belongs to the cyclin family. Cyclin AB subfamily.

Required for pre-meiotic DNA synthesis and S phase progression. Regulates levels of meiotic intragenic recombination. The protein is Meiosis-specific cyclin rem1 (rem1) of Schizosaccharomyces pombe (strain 972 / ATCC 24843) (Fission yeast).